A 211-amino-acid chain; its full sequence is tRNA (guanine-N(7)-)-methyltransferase (211 aa).

4 residues coordinate S-adenosyl-L-methionine: Glu-44, Asp-69, Asp-96, and Asp-118. Residue Asp-118 is part of the active site. Residue Lys-122 participates in substrate binding. The segment at 124-129 is interaction with RNA; sequence RHEKRR. Substrate-binding positions include Asp-154 and 191–194; that span reads TEYE.

It belongs to the class I-like SAM-binding methyltransferase superfamily. TrmB family.

The catalysed reaction is guanosine(46) in tRNA + S-adenosyl-L-methionine = N(7)-methylguanosine(46) in tRNA + S-adenosyl-L-homocysteine. It functions in the pathway tRNA modification; N(7)-methylguanine-tRNA biosynthesis. In terms of biological role, catalyzes the formation of N(7)-methylguanine at position 46 (m7G46) in tRNA. The chain is tRNA (guanine-N(7)-)-methyltransferase from Streptococcus equi subsp. equi (strain 4047).